The chain runs to 156 residues: Small ribosomal subunit protein uS7 (156 aa).

This sequence belongs to the universal ribosomal protein uS7 family. As to quaternary structure, part of the 30S ribosomal subunit. Contacts proteins S9 and S11.

Its function is as follows. One of the primary rRNA binding proteins, it binds directly to 16S rRNA where it nucleates assembly of the head domain of the 30S subunit. Is located at the subunit interface close to the decoding center, probably blocks exit of the E-site tRNA. This chain is Small ribosomal subunit protein uS7, found in Shewanella sp. (strain ANA-3).